We begin with the raw amino-acid sequence, 158 residues long: MPLTHLNEENQPKMVDIGDKETTERIALASGRISMNKEAYDAIINHCVKKGPVLQTAIIAGIMGAKKTSELIPMCHPIMLNGVDIDILEEKETCSFKLYARVKTQAKTGVEMEALMSVSIGLLTIYDMVKAIDKSMTISGVMLEHKSGGKSGDYNAKK.

Substrate-binding positions include Met-74 to His-76 and Met-112 to Glu-113. The active site involves Asp-127.

This sequence belongs to the MoaC family. In terms of assembly, homohexamer; trimer of dimers.

It catalyses the reaction (8S)-3',8-cyclo-7,8-dihydroguanosine 5'-triphosphate = cyclic pyranopterin phosphate + diphosphate. It participates in cofactor biosynthesis; molybdopterin biosynthesis. Its function is as follows. Catalyzes the conversion of (8S)-3',8-cyclo-7,8-dihydroguanosine 5'-triphosphate to cyclic pyranopterin monophosphate (cPMP). The chain is Cyclic pyranopterin monophosphate synthase from Helicobacter pylori (strain ATCC 700392 / 26695) (Campylobacter pylori).